We begin with the raw amino-acid sequence, 1000 residues long: ATP-dependent DNA/RNA helicase DHX36 (1000 aa).

A required for recruitment to cytoplasmic stress granules region spans residues 1–43 (MSYDYHQSWSRDGGPRGSGQGSGGGGGGSRGSGGGGGGRGGRG). The tract at residues 1 to 53 (MSYDYHQSWSRDGGPRGSGQGSGGGGGGSRGSGGGGGGRGGRGRHPAHLKGRE) is disordered. The tract at residues 1–96 (MSYDYHQSWS…IVQLLNSVQA (96 aa)) is required for the pre-miR-134 transport. The tract at residues 1-192 (MSYDYHQSWS…KKTDPRYIEM (192 aa)) is necessary for nuclear and nucleolar caps localizations. Residues 15 to 40 (PRGSGQGSGGGGGGSRGSGGGGGGRG) show a composition bias toward gly residues. A DSM (DHX36-specific motif) region spans residues 45 to 67 (HPAHLKGREIGLWYAKKQTQKNK). The interval 45–97 (HPAHLKGREIGLWYAKKQTQKNKEAERQERAVVHMDERREEQIVQLLNSVQAK) is required for G4-DNA- and G4-RNA-binding. 2 recA-like domain regions span residues 98 to 378 (NDKD…MIHI) and 379 to 620 (PGFT…DYQL). Phosphoserine is present on serine 153. Residues 209-379 (VNLINNHQVT…FGNCPMIHIP (171 aa)) form the Helicase ATP-binding domain. 225 to 230 (GCGKTT) lines the ATP pocket. A necessary for interaction with single-stranded DNA at the 3'-end of the G4-DNA structure region spans residues 257–309 (RRISAISVAERVAAERAESCGNGNSTGYQIRLQSRLPRKQGSILYCTTGIILQ). Residues 326-329 (DEIH) carry the DEAH box motif. Positions 327 and 329 each coordinate Mg(2+). The region spanning 469 to 639 (ALIRYIVLEE…ELCLQIKILR (171 aa)) is the Helicase C-terminal domain. A necessary for interaction with single-stranded DNA at the 3'-end of the G4-DNA structure region spans residues 490 to 549 (WDNISTLHDLLMSQVMFKSDRFLIIPLHSLMPTVNQTQVFKKTPPGVRKIVIATNIAETS). The short motif at 509–520 (DRFLIIPLHSLM) is the Nuclear localization signal element. Residues serine 549 and 594 to 597 (RAGR) each bind ATP. The tract at residues 621 to 690 (PEILRTPLEE…LGVHLARLPV (70 aa)) is WH domain. Necessary for interaction with single-stranded DNA at the 3'-end of the G4-DNA structure stretches follow at residues 630 to 689 (ELCL…ARLP), 841 to 852 (NLGKKRKMVKVH), and 862 to 892 (HPKS…IYLY). Positions 833–897 (PKVAKIRLNL…SIYLYDCTEV (65 aa)) are OB-fold-like subdomains. An N6-acetyllysine modification is found at lysine 939.

Found in a multi-helicase-TICAM1 complex at least composed of DHX36, DDX1, DDX21 and TICAM1; this complex exists in resting cells with or without dsRNA poly(I:C) ligand stimulation. Interacts (via C-terminus) with TICAM1 (via TIR domain). Interacts (via C-terminus) with DDX21; this interaction serves as bridges to TICAM1. Interacts with TERT; this interaction is dependent on the ability of DHX36 to bind to the G-quadruplex RNA (G4-RNA) structure present in the telomerase RNA template component (TERC). Interacts with DKC1; this interaction is dependent on the ability of DHX36 to bind to the G4-RNA structure present in TERC. Interacts with PARN; this interaction stimulates PARN to enhance uPA mRNA decay. Interacts with EXOSC3; this interaction occurs in a RNase-insensitive manner. Interacts with EXOSC10; this interaction occurs in a RNase-insensitive manner. Interacts with ILF3; this interaction occurs in a RNA-dependent manner. Interacts with ELAVL1; this interaction occurs in an RNA-dependent manner. Interacts with DDX5; this interaction occurs in a RNA-dependent manner. Interacts with DDX17; this interaction occurs in a RNA-dependent manner. Interacts with HDAC1; this interaction occurs in a RNA-dependent manner. Interacts with HDAC3; this interaction occurs in a RNA-dependent manner. Interacts with HDAC4. Interacts with AGO1. Interacts with AGO2. Interacts with ERCC6. Mg(2+) serves as cofactor.

It localises to the nucleus. It is found in the cytoplasm. The protein resides in the cytosol. Its subcellular location is the stress granule. The protein localises to the nucleus speckle. It localises to the chromosome. It is found in the telomere. The protein resides in the mitochondrion. Its subcellular location is the perikaryon. The protein localises to the cell projection. It localises to the dendrite. It is found in the axon. It carries out the reaction ATP + H2O = ADP + phosphate + H(+). ATPase activity is enhanced in the presence of homomeric poly(U) RNAs, but not by double-stranded DNA (dsDNA), double-stranded RNA (dsRNA) and tRNA. Its function is as follows. Multifunctional ATP-dependent helicase that unwinds G-quadruplex (G4) structures. Plays a role in many biological processes such as genomic integrity, gene expression regulations and as a sensor to initiate antiviral responses. G4 structures correspond to helical structures containing guanine tetrads. Binds with high affinity to and unwinds G4 structures that are formed in nucleic acids (G4-DNA and G4-RNA). Plays a role in genomic integrity. Converts the G4-RNA structure present in telomerase RNA template component (TREC) into a double-stranded RNA to promote P1 helix formation that acts as a template boundary ensuring accurate reverse transcription. Plays a role in transcriptional regulation. Resolves G4-DNA structures in promoters of genes, such as YY1, KIT/c-kit and ALPL and positively regulates their expression. Plays a role in post-transcriptional regulation. Unwinds a G4-RNA structure located in the 3'-UTR polyadenylation site of the pre-mRNA TP53 and stimulates TP53 pre-mRNA 3'-end processing in response to ultraviolet (UV)-induced DNA damage. Binds to the precursor-microRNA-134 (pre-miR-134) terminal loop and regulates its transport into the synapto-dendritic compartment. Involved in the pre-miR-134-dependent inhibition of target gene expression and the control of dendritic spine size. Plays a role in the regulation of cytoplasmic mRNA translation and mRNA stability. Binds to both G4-RNA structures and alternative non-quadruplex-forming sequence within the 3'-UTR of the PITX1 mRNA regulating negatively PITX1 protein expression. Binds to both G4-RNA structure in the 5'-UTR and AU-rich elements (AREs) localized in the 3'-UTR of NKX2-5 mRNA to either stimulate protein translation or induce mRNA decay in an ELAVL1-dependent manner, respectively. Also binds to ARE sequences present in several mRNAs mediating exosome-mediated 3'-5' mRNA degradation. Involved in cytoplasmic urokinase-type plasminogen activator (uPA) mRNA decay. Component of a multi-helicase-TICAM1 complex that acts as a cytoplasmic sensor of viral double-stranded RNA (dsRNA) and plays a role in the activation of a cascade of antiviral responses including the induction of pro-inflammatory cytokines via the adapter molecule TICAM1. Required for the early embryonic development and hematopoiesis. Involved in the regulation of cardioblast differentiation and proliferation during heart development. Involved in spermatogonia differentiation. May play a role in ossification. In Rattus norvegicus (Rat), this protein is ATP-dependent DNA/RNA helicase DHX36.